Reading from the N-terminus, the 362-residue chain is Outer envelope protein 39, chloroplastic (362 aa).

It belongs to the OEP80 (TC 1.B.33.2) family. In terms of tissue distribution, expressed in germinating seeds. Expressed in the vasculature of roots, cotyledons and leaves.

The protein resides in the plastid. It is found in the chloroplast outer membrane. Its function is as follows. Beta-barrel pore-forming protein which possesses voltage-dependent channel activity. Required for proper plastid development. Involved in the maintenance of metabolic homeostasis of full-grown plants. This is Outer envelope protein 39, chloroplastic from Arabidopsis thaliana (Mouse-ear cress).